A 757-amino-acid polypeptide reads, in one-letter code: Filensin (757 aa).

The tract at residues 1–39 (MYRRSYVFQTRKEQYERAEEAPRAAEPDRLAEARAAAPN) is head. A Phosphoserine modification is found at Ser-5. In terms of domain architecture, IF rod spans 39–319 (NLAALQGLGE…RIIENEGNRL (281 aa)). A coil 1A region spans residues 40-74 (LAALQGLGERVAAHVQRARALEQRHAVLRRQLDAF). Ala-41 carries the N-acetylalanine modification. The tract at residues 75-83 (QRLDELAGP) is linker 1. Positions 84 to 183 (EDALARHVEG…RYKKNLLEIQ (100 aa)) are coil 1B. The segment at 184–200 (TYVTILQQIIQTTPQAA) is linker 12. The coil 2 stretch occupies residues 201-319 (AITSGMREEK…RIIENEGNRL (119 aa)). The interval 320 to 756 (SSAFIETPIT…KKLGEKGSSS (437 aa)) is tail. A phosphoserine mark is found at Ser-340 and Ser-419. Disordered stretches follow at residues 406-436 (EGESKLEPGDEEASPPTQEGAPEDVPDGGKI) and 493-705 (GVVV…PPRK). Gly-433 carries N-myristoyl glycine lipidation. Low complexity predominate over residues 493 to 512 (GVVVSKGDDSVPPDSGVEPS). Ser-512 carries the phosphoserine modification. Residues 528-658 (QEKEDGLKEE…KQDDQKEEGA (131 aa)) are compositionally biased toward basic and acidic residues. Copy 1 of the repeat occupies 532–545 (DGLKEEGGPPEGKG). The 7 X 14 AA tandem repeats stretch occupies residues 532–622 (DGLKEEGGPP…EEEGPLQKKE (91 aa)). One copy of the 2; truncated repeat lies at 546–552 (EPPEGKG). 5 tandem repeats follow at residues 553–566 (DSVKEEGGPPEGKG), 567–580 (DGVKEEGGPPEGKG), 581–594 (DGVKEEGGPPEGKG), 595–608 (DGVKKEGEPPEGKG), and 609–622 (EGLKEEEGPLQKKE). Thr-628 and Thr-674 each carry phosphothreonine. Ser-701, Ser-754, and Ser-755 each carry phosphoserine.

The protein belongs to the intermediate filament family. Part of a complex required for lens intermediate filament formation composed of BFSP1, BFSP2 and CRYAA. Identified in a complex that contains VIM, EZR, AHNAK, BFSP1, BFSP2, ANK2, PLEC, PRX and spectrin. Found in a complex composed of PPL (via C-terminal linker domain), BFSP1 and BFSP2 in the retinal lens. Within the complex interacts with BFSP2. Interacts (via C-terminus) with MIP (via C-terminus) in aged lens fiber cells. Post-translationally, proteolytically cleaved during lens cell fiber differentiation with increased fragmentation as fiber cell age increases. Myristoylated at Gly-433 following proteolytic cleavage at Asp-432. In terms of processing, acetylated at Ala-41 following proteolytic cleavage at Leu-40. As to expression, abundantly expressed in both the inner and outer cortex of the retina, expressed at a lower level in the nucleus of the retina (at protein level). Detected in eye lens fiber cells (at protein level).

It is found in the cell membrane. It localises to the cytoplasm. Its subcellular location is the cytoskeleton. The protein localises to the cell cortex. Functionally, required for the correct formation of lens intermediate filaments as part of a complex composed of BFSP1, BFSP2 and CRYAA. Involved in altering the calcium regulation of MIP water permeability. The sequence is that of Filensin (BFSP1) from Bos taurus (Bovine).